A 368-amino-acid polypeptide reads, in one-letter code: 3-dehydroquinate synthase (368 aa).

Residues 71-76, 105-109, 129-130, lysine 142, lysine 151, and 169-172 contribute to the NAD(+) site; these read DGEAFK, GVVGD, TT, and TLRT. Zn(2+)-binding residues include glutamate 184, histidine 247, and histidine 264.

Belongs to the sugar phosphate cyclases superfamily. Dehydroquinate synthase family. Co(2+) is required as a cofactor. It depends on Zn(2+) as a cofactor. NAD(+) serves as cofactor.

The protein resides in the cytoplasm. It carries out the reaction 7-phospho-2-dehydro-3-deoxy-D-arabino-heptonate = 3-dehydroquinate + phosphate. It participates in metabolic intermediate biosynthesis; chorismate biosynthesis; chorismate from D-erythrose 4-phosphate and phosphoenolpyruvate: step 2/7. Catalyzes the conversion of 3-deoxy-D-arabino-heptulosonate 7-phosphate (DAHP) to dehydroquinate (DHQ). In Cupriavidus necator (strain ATCC 17699 / DSM 428 / KCTC 22496 / NCIMB 10442 / H16 / Stanier 337) (Ralstonia eutropha), this protein is 3-dehydroquinate synthase.